Here is a 76-residue protein sequence, read N- to C-terminus: Translation initiation factor IF-1 (76 aa).

Positions 1 to 76 constitute an S1-like domain; the sequence is MEDMAKKDGV…TRGRIVYRYK (76 aa).

It belongs to the IF-1 family. Component of the 30S ribosomal translation pre-initiation complex which assembles on the 30S ribosome in the order IF-2 and IF-3, IF-1 and N-formylmethionyl-tRNA(fMet); mRNA recruitment can occur at any time during PIC assembly.

Its subcellular location is the cytoplasm. Functionally, one of the essential components for the initiation of protein synthesis. Stabilizes the binding of IF-2 and IF-3 on the 30S subunit to which N-formylmethionyl-tRNA(fMet) subsequently binds. Helps modulate mRNA selection, yielding the 30S pre-initiation complex (PIC). Upon addition of the 50S ribosomal subunit IF-1, IF-2 and IF-3 are released leaving the mature 70S translation initiation complex. This chain is Translation initiation factor IF-1, found in Renibacterium salmoninarum (strain ATCC 33209 / DSM 20767 / JCM 11484 / NBRC 15589 / NCIMB 2235).